The primary structure comprises 741 residues: MASTSSLALSQALLARAISHHGSDQRGSLPAFSGLKSTGSRASASSRRRIAQSMTKNRSLRPLVRAAAVETVEPTTDSSIVDKSVNSIRFLAIDAVEKAKSGHPGLPMGCAPMAHILYDEVMRYNPKNPYWFNRDRFVLSAGHGCMLLYALLHLAGYDSVQEEDLKQFRQWGSKTPGHPENFETPGIEVTTGPLGQGIANAVGLALAEKHLAARFNKPDAEVVDHYTYAILGDGCQMEGISNEACSLAGHWGLGKLIAFYDDNHISIDGDTEIAFTENVDQRFEALGWHVIWVKNGNTGYDEIRAAIKEAKTVTDKPTLIKVTTTIGYGSPNKANSYSVHGAALGEKEVEATRNNLGWPYEPFQVPDDVKSHWSRHTPEGATLESDWSAKFAAYEKKYPEEASELKSIITGELPAGWEKALPTYTPESPGDATRNLSQQCLNALAKVVPGFLGGSADLASSNMTLLKAFGDFQKATPEERNLRFGVREHGMGAICNGIALHSPGLIPYCATFFVFTDYMRGAMRISALSEAGVIYVMTHDSIGLGEDGPTHQPIEHIASFRAMPNTLMFRPADGNETAGAYKIAVTKRKTPSILALSRQKLPHLPGTSIEGVEKGGYTISDDSSGNKPDVILIGTGSELEIAAQAAEVLRKDGKTVRVVSFVCWELFDEQSDEYKESVLPSDVSARVSIEAASTFGWGKIVGGKGKSIGINSFGASAPAPLLYKEFGITVEAVVDAAKSFF.

The N-terminal 66 residues, 1-66 (MASTSSLALS…NRSLRPLVRA (66 aa)), are a transit peptide targeting the chloroplast. The disordered stretch occupies residues 22 to 51 (GSDQRGSLPAFSGLKSTGSRASASSRRRIA). A67 bears the N-acetylalanine mark. A substrate-binding site is contributed by H103. Residues H143 and 192-194 (GPL) each bind thiamine diphosphate. D233 provides a ligand contact to Mg(2+). G234 and N263 together coordinate thiamine diphosphate. 2 residues coordinate Mg(2+): N263 and I265. H340 serves as a coordination point for substrate. Residue H340 coordinates thiamine diphosphate. S428 carries the phosphoserine modification. Residues R434 and S461 each coordinate substrate. Positions 488 and 515 each coordinate thiamine diphosphate. Residue E488 is the Proton donor of the active site. Positions 539, 547, and 598 each coordinate substrate.

This sequence belongs to the transketolase family. Homodimer. It depends on Mg(2+) as a cofactor. Requires Ca(2+) as cofactor. The cofactor is Mn(2+). Co(2+) serves as cofactor. Thiamine diphosphate is required as a cofactor.

It localises to the plastid. It is found in the chloroplast stroma. The catalysed reaction is D-sedoheptulose 7-phosphate + D-glyceraldehyde 3-phosphate = aldehydo-D-ribose 5-phosphate + D-xylulose 5-phosphate. It participates in carbohydrate biosynthesis; Calvin cycle. Catalyzes the reversible transfer of a two-carbon ketol group from fructose-6-phosphate or sedoheptulose-7-phosphate to glyceraldehyde-3-phosphate to yield xylulose-5-phosphate and erythrose-4-phosphate or ribose-5-phosphate, respectively. Could act as a stress sensor involved in adaptation process. This is Transketolase-1, chloroplastic (TKL-1) from Arabidopsis thaliana (Mouse-ear cress).